The chain runs to 1181 residues: MAAVQVVGSLPSGQLREAPRDAIPEGGNGFRRLSARLCALRPDDSSSARTEIHLLFDQLISENYSEGSGVAPEDVSALLVQACRLVPLNQNHLVSKVSQLIHHLLNRLQVIVDEQRLDFLLAYTISAIHQCSSWTHMEILQALAALVYCNGSKCQKYLLELLGETGLLMKLSDLAQSDPEVRRAAVHCMANLCLSVPGQPYLEEPYQNVCFQAFLTILQSPKSSDMDDITFCMLLQNALKGIQSLLNGGRMKLTQTDELGALLAVLKKFMFHGLPGLNIEMPMVLYPTPLPQYDGRTPIKPQQSESSASRPTLNKKKKSKVKPKKIQQGEEEEKESSGEIEAAPVTGTGRVNLHEGNTWCPSSLGVQSLPLDGSGAAGKDGVSSPFSSSSWKRVSSSESDFSDAEGGMQSKMRSYQAKVRQVALVCFLSTIKSIEKKVLYGYWSAFIPDTPELGSPQSVSLMTLTLKDPSPKTRACALQVLSAILEGSKQFLSVAEDTSDHRRAFTPFSVMIASSIRELHRCLLLALVAESSSQTLTQIIKCLANLVSDAPYDRLKLSLLTKVWNQIKPYIRHKDVNVRVSSLTLLGAIVSTHAPLPEVQLLLQQPCSSGLSNSNSATPHLSPPDWWKKAPAGPSLEETSVSSPKGSSEPCWLIRLCISIVVLPKEDSCSGSDAGSAAGSTYEPSPMRLEALQVLTLLARGYFSMTQAYLMELGEVICKCMGEADPSIQLHGAKLLEELGTGLIQQYKPDSTAAPDQRAPVFLVVMFWTMMLNGPLPRALQNSEHPTLQAGACDALSSILPEAFSNLPKDRQILCITVLLGLNDSKNRLVKAATSRALGVYVLFPCLRQDVIFVADTANAILMSLEDKSLNVRANAAWSLGNLTDTLIVNMETPDPSFQEEFSGLLLLKMLRSAIEASKDKDKVKSNAVRALGNLLHFLQPSHIEKPTFAEIIEESIQALISTVLTEAAMKVRWNACYAMGNVFKNPALPLGTAPWTSQAYNALTSVVTSCKNFKVRIRSAAALSVPGKREQYGSVDQYAGIWNALVTALQKSEDTRDFLEFKYCASLRTQICQALIHLLNLASASDLPCIKETLELNGNMVQSYILQFIKSGAEGDDTGAPHSPQERDQMVRMALKHMGSIQAPTGDTARRAVMGFLEEILAVCFDSSGSQGALPGLTNQ.

The HEAT 1 repeat unit spans residues 159–198 (LELLGETGLLMKLSDLAQSDPEVRRAAVHCMANLCLSVPG). Disordered stretches follow at residues 294–347 (DGRT…PVTG) and 371–407 (LDGS…AEGG). Polar residues predominate over residues 300 to 312 (KPQQSESSASRPT). Residues 313–325 (LNKKKKSKVKPKK) show a composition bias toward basic residues. Residues serine 336, serine 337, serine 399, and serine 402 each carry the phosphoserine modification. Residues 383–399 (SSPFSSSSWKRVSSSES) are compositionally biased toward low complexity. HEAT repeat units follow at residues 452–490 (ELGS…GSKQ), 514–552 (SSIR…DAPY), and 558–595 (SLLT…THAP). The tract at residues 613-648 (NSNSATPHLSPPDWWKKAPAGPSLEETSVSSPKGSS) is disordered. Threonine 618 is modified (phosphothreonine). A compositionally biased stretch (polar residues) spans 637 to 646 (EETSVSSPKG). Serine 643 is subject to Phosphoserine.

This Pongo abelii (Sumatran orangutan) protein is HEAT repeat-containing protein 6 (HEATR6).